A 612-amino-acid chain; its full sequence is MPEAPKIAALEVSDESLAEKNKNKLQFIEDVTTNADDVQRRVLEEILSRNADVEYLKRHGLEGRTDRETFKHIMPVVTYEDIQPEINRIANGDKSQVLCSNPISEFLTSSGTSGGERKLMPTIEEELDRRSLLYSLLMPVMDQFVPGLDKGKGMYFLFIKSESKTPGGLPARPVLTSYYKSSHFKNRPYDPYTNYTSPNQTILCSDSYQSMYSQMLCGLCQHKEVLRVGAVFASGFIRAIKFLEKHWPELARDIRTGTLSSEITDSSVREAVGEILKPDPKLADFVESECRKTSWQGIITRLWPNTKYVDVIVTGTMSQYIPTLDYYSNGLPLVCTMYASSECYFGVNLRPLCKPSEVSYTLIPNMAYFEFLPVHRNSGVTSSISLPKALTEKEQQELVDLVDVKLGQEYELVVTTYAGLYRYRVGDVLSVAGFKNNAPQFSFICRKNVVLSIDSDKTDEVELQNAVKNAVTHLVPFDASLSEYTSYADTSSIPGHYVLFWELCLNGNTPIPPSVFEDCCLTIEESLNSVYRQGRVSDKSIGPLEIKMVESGTFDKLMDYAISLGASINQYKTPRCVKFAPIIELLNSRVVDSYFSPKCPKWSPGHKQWGSN.

Belongs to the IAA-amido conjugating enzyme family. As to expression, expressed in cotyledons, stipules, true leaves, hypocotyls, and all parts of the roots. Not detected in flowers.

In terms of biological role, catalyzes the synthesis of indole-3-acetic acid (IAA)-amino acid conjugates, providing a mechanism for the plant to cope with the presence of excess auxin. Strongly reactive with Glu, Gln, Trp, Asp, Ala, Leu, Phe, Gly, Tyr, Met, Ile and Val. Little or no product formation with His, Ser, Thr, Arg, Lys, or Cys. Also active on pyruvic and butyric acid analogs of IAA, PAA and the synthetic auxin naphthaleneacetic acid (NAA). The two chlorinated synthetic auxin herbicides 2,4-D and 3,6-dichloro-o-anisic acid (dicamba) cannot be used as substrates. Involved in auxin signal transduction. Inhibits shoot and hypocotyl cell elongation, and lateral root cell differentiation in light. The sequence is that of Indole-3-acetic acid-amido synthetase GH3.6 (GH3.6) from Arabidopsis thaliana (Mouse-ear cress).